The following is a 302-amino-acid chain: Deoxyhypusine hydroxylase (302 aa).

The residue at position 1 (M1) is an N-acetylmethionine. 5 HEAT-like PBS-type repeats span residues 54-80 (LKHE…VLQD), 87-113 (VRHE…YSTD), 175-201 (ERYR…GLKC), 206-232 (FRHE…TLAR), and 239-265 (VRHE…YITD). The Fe cation site is built by H56, H89, and E90. Residues H208, H241, and E242 each coordinate Fe cation.

It belongs to the deoxyhypusine hydroxylase family. The cofactor is Fe(2+).

It carries out the reaction [eIF5A protein]-deoxyhypusine + AH2 + O2 = [eIF5A protein]-hypusine + A + H2O. The protein operates within protein modification; eIF5A hypusination. Catalyzes the hydroxylation of the N(6)-(4-aminobutyl)-L-lysine intermediate produced by deoxyhypusine synthase/DHPS on a critical lysine of the eukaryotic translation initiation factor 5A/eIF-5A. This is the second step of the post-translational modification of that lysine into an unusual amino acid residue named hypusine. Hypusination is unique to mature eIF-5A factor and is essential for its function. The chain is Deoxyhypusine hydroxylase (Dohh) from Rattus norvegicus (Rat).